The primary structure comprises 181 residues: Protein Syd (181 aa).

The protein belongs to the Syd family.

The protein resides in the cell inner membrane. In terms of biological role, interacts with the SecY protein in vivo. May bind preferentially to an uncomplexed state of SecY, thus functioning either as a chelating agent for excess SecY in the cell or as a regulatory factor that negatively controls the translocase function. This is Protein Syd from Escherichia coli O17:K52:H18 (strain UMN026 / ExPEC).